A 277-amino-acid polypeptide reads, in one-letter code: NAD kinase (277 aa).

Asp-67 functions as the Proton acceptor in the catalytic mechanism. NAD(+)-binding positions include 67–68 (DG), Arg-72, 137–138 (NE), Lys-148, Arg-165, Asp-167, 178–183 (TGYAMS), Leu-202, and Gln-236.

This sequence belongs to the NAD kinase family. The cofactor is a divalent metal cation.

Its subcellular location is the cytoplasm. It catalyses the reaction NAD(+) + ATP = ADP + NADP(+) + H(+). Involved in the regulation of the intracellular balance of NAD and NADP, and is a key enzyme in the biosynthesis of NADP. Catalyzes specifically the phosphorylation on 2'-hydroxyl of the adenosine moiety of NAD to yield NADP. The protein is NAD kinase of Pyrococcus abyssi (strain GE5 / Orsay).